A 166-amino-acid polypeptide reads, in one-letter code: Small ribosomal subunit protein uS5 (166 aa).

Residues 11 to 74 (LQEKLIAVNR…EKARRNMMNV (64 aa)) enclose the S5 DRBM domain.

It belongs to the universal ribosomal protein uS5 family. As to quaternary structure, part of the 30S ribosomal subunit. Contacts proteins S4 and S8.

Functionally, with S4 and S12 plays an important role in translational accuracy. Its function is as follows. Located at the back of the 30S subunit body where it stabilizes the conformation of the head with respect to the body. This is Small ribosomal subunit protein uS5 from Sodalis glossinidius (strain morsitans).